A 261-amino-acid polypeptide reads, in one-letter code: MRIALGIEYDGNGYFGWQRQAEVDSVQAQLERALSIVANEPIGVFCAGRTDAGVHATGQVVHFETQAIRNEGAWTLGVNANLPDNIAVRWVKEVDDSFHARFSATARRYRYVIYNHSFRPGILRHGVSHYHGDIDADRMHQAAQALLGEQDFTSFRAVQCQSKTPFRNVHCVNVTRQGMYVIVDIAANAFLHHMVRNIVGSLLEIGLGNQPLTWMGDLLALKDRNQAAATAKPHGLYLVDVTYPEQYQLPKLALGPLFMLD.

The active-site Nucleophile is Asp51. Substrate is bound at residue Tyr109.

The protein belongs to the tRNA pseudouridine synthase TruA family. In terms of assembly, homodimer.

It carries out the reaction uridine(38/39/40) in tRNA = pseudouridine(38/39/40) in tRNA. Functionally, formation of pseudouridine at positions 38, 39 and 40 in the anticodon stem and loop of transfer RNAs. This is tRNA pseudouridine synthase A from Shewanella baltica (strain OS155 / ATCC BAA-1091).